A 226-amino-acid polypeptide reads, in one-letter code: Clarin-3 (226 aa).

Residues 8–28 (LMFLSGFLTSLGSVVVICSIL) traverse the membrane as a helical segment. An N-linked (GlcNAc...) asparagine glycan is attached at Asn46. Helical transmembrane passes span 92 to 112 (VVIL…VFTF), 128 to 148 (GVYT…VLFV), and 181 to 201 (FWLT…IIFY).

Belongs to the clarin family.

The protein localises to the membrane. In Mus musculus (Mouse), this protein is Clarin-3 (Clrn3).